A 423-amino-acid chain; its full sequence is G2/mitotic-specific cyclin-B1 (423 aa).

Ser-116 is subject to Phosphoserine; by CDK1. A Phosphoserine modification is found at Ser-118. The residue at position 123 (Ser-123) is a Phosphoserine; by PLK1. Ser-137 carries the phosphoserine modification. Interaction with CDK2 regions lie at residues 159–167 (EYVKDIYAY) and 248–251 (YEEM). Thr-311 bears the Phosphothreonine mark.

The protein belongs to the cyclin family. Cyclin AB subfamily. Interacts with the CDC2 protein kinase to form a serine/threonine kinase holoenzyme complex also known as maturation promoting factor (MPF). The cyclin subunit imparts substrate specificity to the complex. Binds HEI10. Interacts with catalytically active RALBP1 and CDC2 during mitosis to form an endocytotic complex during interphase. Interacts with CCNF; interaction is required for nuclear localization. Interacts with CDK5RAP3. Interacts with RFPL4A and UBE2A. Interacts with INCA1. Post-translationally, ubiquitinated by the SCF(NIPA) complex during interphase, leading to its destruction. Deubiquitinated by USP22 during G2/M phase. Phosphorylated by PLK1 at Ser-123 on centrosomes during prophase: phosphorylation by PLK1 does not cause nuclear import. Phosphorylation at Ser-137 was also reported to be mediated by PLK1 but Ser-123 seems to be the primary phosphorylation site.

The protein resides in the cytoplasm. The protein localises to the nucleus. It is found in the cytoskeleton. It localises to the microtubule organizing center. Its subcellular location is the centrosome. Functionally, essential for the control of the cell cycle at the G2/M (mitosis) transition. The polypeptide is G2/mitotic-specific cyclin-B1 (Ccnb1) (Rattus norvegicus (Rat)).